A 679-amino-acid polypeptide reads, in one-letter code: Altered inheritance of mitochondria protein 21 (679 aa).

The interval 1–95 (MPSEVTPKVP…EELNNVMNNT (95 aa)) is disordered. Over residues 9 to 19 (VPERPSRRKTS) the composition is skewed to basic and acidic residues. Position 18 is a phosphothreonine (Thr18). Ser36 bears the Phosphoserine mark. Position 58 is a phosphothreonine (Thr58). A Phosphoserine modification is found at Ser70. Position 85 is a phosphothreonine (Thr85). Residues 86–95 (EELNNVMNNT) are compositionally biased toward polar residues. At Ser104 the chain carries Phosphoserine. 2 disordered regions span residues 107–522 (SKHN…EKIE) and 548–679 (LMDT…FHSL). The span at 109 to 119 (HNIHSVSRKKS) shows a compositional bias: basic residues. 2 stretches are compositionally biased toward polar residues: residues 133 to 149 (QNGQ…TNPS) and 164 to 178 (SAIS…SNNE). The segment covering 179–213 (VTEHSDSEDLTEKQKVHAALDNEAGDGSHFEEKLI) has biased composition (basic and acidic residues). 3 positions are modified to phosphoserine: Ser183, Ser206, and Ser231. Positions 243–272 (SDDKAEKFTKHPESSLEELQKHQEQQEEKI) are enriched in basic and acidic residues. Phosphothreonine is present on Thr277. Ser284 bears the Phosphoserine mark. Positions 296 to 323 (EVNSQPQGPSDTETVIAATSSNVPSQIA) are enriched in polar residues. Ser324 carries the phosphoserine modification. 2 stretches are compositionally biased toward basic and acidic residues: residues 339-351 (KKDF…KEEL) and 372-383 (EESKIPKIPSER). An interaction with SH3 domain of ABP1 region spans residues 383–396 (RPKRRAPPPVPKKP). 2 stretches are compositionally biased toward polar residues: residues 414 to 427 (DLHN…TTAS) and 437 to 452 (SSIT…TSKL). A compositionally biased stretch (basic and acidic residues) spans 471–482 (LEKKLSSPDTES). Over residues 483–492 (KLGTQDQSQA) the composition is skewed to polar residues. Residues 501–512 (RRGRGPRGRKLP) show a composition bias toward basic residues. Residue Thr552 is modified to Phosphothreonine. The span at 556-576 (QAERALDEKSKSIPEEQREQS) shows a compositional bias: basic and acidic residues. Phosphoserine is present on Ser576. Over residues 603-613 (PLSQLPQTNAV) the composition is skewed to polar residues. 8 positions are modified to phosphoserine: Ser620, Ser623, Ser625, Ser627, Ser667, Ser671, Ser675, and Ser678. Residues 667 to 679 (SALHSEEASFHSL) show a composition bias toward basic and acidic residues.

This sequence belongs to the AIM21 family. Interacts with ribosomes. Interacts with ABP1.

The protein resides in the cytoplasm. The protein localises to the cytoskeleton. It is found in the actin patch. Involved in mitochondrial migration along actin filaments. The polypeptide is Altered inheritance of mitochondria protein 21 (AIM21) (Saccharomyces cerevisiae (strain YJM789) (Baker's yeast)).